We begin with the raw amino-acid sequence, 310 residues long: Endo-1,4-beta-xylanase B (310 aa).

An N-terminal signal peptide occupies residues 1–19 (MISLSSVAIALTTVVGALA). Residues 33–223 (AITSSQTGTN…SSGSASMTVS (191 aa)) form the GH11 domain. Glutamate 119 functions as the Nucleophile in the catalytic mechanism. The active-site Proton donor is glutamate 210. The span at 218–227 (ASMTVSAGSS) shows a compositional bias: low complexity. Residues 218–274 (ASMTVSAGSSSSGGSGSGSGSGSGSGSGSGSQTTTAGSSTGTGTGSGSGSGSGGSGG) are disordered. The span at 228-246 (SSGGSGSGSGSGSGSGSGS) shows a compositional bias: gly residues. The span at 247-256 (GSQTTTAGSS) shows a compositional bias: low complexity. Gly residues predominate over residues 257-274 (TGTGTGSGSGSGSGGSGG). The region spanning 275-310 (NCAAQWGQCGGQGWNGPTCCSSGTCKASNQWYSQCL) is the CBM1 domain.

It belongs to the glycosyl hydrolase 11 (cellulase G) family.

It localises to the secreted. The catalysed reaction is Endohydrolysis of (1-&gt;4)-beta-D-xylosidic linkages in xylans.. It functions in the pathway glycan degradation; xylan degradation. Functionally, endo-1,4-beta-xylanase involved in the hydrolysis of xylan, a major structural heterogeneous polysaccharide found in plant biomass representing the second most abundant polysaccharide in the biosphere, after cellulose. Hydrolyzes birchwood xylan, beechwood xylan, and oat spelt xylan to produce short-chain xylooligosaccharides, xylopentaose, xylotriose, and xylobiose as the main products. This is Endo-1,4-beta-xylanase B (xynB) from Penicillium oxalicum.